The following is a 436-amino-acid chain: Prenyltransferase nscD (436 aa).

This sequence belongs to the tryptophan dimethylallyltransferase family.

Its pathway is secondary metabolite biosynthesis. Its function is as follows. Prenyltransferase; part of the gene cluster that mediates the biosynthesis of neosartoricin B, a prenylated anthracenone that probably exhibits T-cell antiproliferative activity, suggestive of a physiological role as an immunosuppressive agent. The non-reducing polyketide synthase nscA probably synthesizes and cyclizes the decaketide backbone. The hydrolase nscB then mediates the product release through hydrolysis followed by spontaneous decarboxylation. The prenyltransferase nscD catalyzes the addition of the dimethylallyl group to the aromatic C5. The FAD-dependent monooxygenase nscC is then responsible for the stereospecific hydroxylation at C2. Neosartoricin B can be converted into two additional compounds neosartoricins C and D. Neosartoricin C is a spirocyclic compound that is cyclized through the attack of C3 hydroxyl on C14, followed by dehydration. On the other hand, neosartoricin D is a further cyclized compound in which attack of C2 on C14 in neosartoricin C results in the formation of the acetal-containing dioxabicyclo-octanone ring. Both of these compounds are novel and possibly represent related metabolites of the gene cluster. The protein is Prenyltransferase nscD of Arthroderma otae (strain ATCC MYA-4605 / CBS 113480) (Microsporum canis).